A 332-amino-acid chain; its full sequence is T-cell surface glycoprotein CD1c1 (332 aa).

Positions 1-17 are cleaved as a signal peptide; sequence MLFLHFLFLDVVLGGSI. Residues 18–300 lie on the Extracellular side of the membrane; sequence TENVVQENIS…IILYWGHGLS (283 aa). Asn-25, Asn-38, Asn-75, and Asn-146 each carry an N-linked (GlcNAc...) asparagine glycan. 2 cysteine pairs are disulfide-bonded: Cys-120–Cys-184 and Cys-224–Cys-279. In terms of domain architecture, Ig-like spans 205 to 292; that stretch reads PEVWLSSSPN…HSSLRDQDII (88 aa). A helical membrane pass occupies residues 301-321; it reads VILITFAVIVPLVLLIVLMLL. The Cytoplasmic segment spans residues 322–332; it reads YKKRCTYQGIQ.

Heterodimer with B2M (beta-2-microglobulin).

Its subcellular location is the cell membrane. The protein resides in the endosome membrane. In terms of biological role, antigen-presenting protein that binds self and non-self lipid and glycolipid antigens and presents them to T-cell receptors on natural killer T-cells. This chain is T-cell surface glycoprotein CD1c1 (CD1C1), found in Cavia porcellus (Guinea pig).